The primary structure comprises 211 residues: RILP-like protein 2 (211 aa).

Positions 1–32 (MEEPPVREEEEEEGEEDEERDEVGPEGALGKS) are disordered. A compositionally biased stretch (acidic residues) spans 8–21 (EEEEEEGEEDEERD). An RH1 domain is found at 24-106 (GPEGALGKSP…RKEVEGLRRQ (83 aa)). A coiled-coil region spans residues 70–164 (RVLEMLEALV…VQEELQCYKS (95 aa)). S107 bears the Phosphoserine mark. In terms of domain architecture, RH2 spans 130 to 201 (RPRFTLQELR…NKEEKTIIKK (72 aa)). The segment at 166–190 (LIPPREGPGGRREKDAVVTSAKNAG) is disordered.

Belongs to the RILPL family. In terms of assembly, homodimer. Interacts with RAC1. Interacts (via N-terminus) with MYO5A, the interaction is required for its role in dendrite formation. Interacts with RAB8A; interaction is dependent on the phosphorylation of RAB8A on 'Thr-72'. Interacts with RAB10 and RAB12; interaction is dependent on the phosphorylation of 'Thr-73' on RAB10 and 'Ser-105' on RAB12. In terms of tissue distribution, widely expressed. Expressed at higher level in lung.

Its subcellular location is the cytoplasm. The protein resides in the cytosol. It is found in the cytoskeleton. The protein localises to the microtubule organizing center. It localises to the centrosome. Its subcellular location is the cell projection. The protein resides in the cilium. Involved in cell shape and neuronal morphogenesis, positively regulating the establishment and maintenance of dendritic spines. Plays a role in cellular protein transport, including protein transport away from primary cilia. May function via activation of RAC1 and PAK1. In Homo sapiens (Human), this protein is RILP-like protein 2 (RILPL2).